Consider the following 1644-residue polypeptide: Peroxisome proliferator-activated receptor gamma coactivator-related protein 1 (1644 aa).

7 disordered regions span residues 1–61 (MAAR…DSSF), 170–249 (PERD…EVAG), 429–616 (LTPK…TSPV), 646–761 (AADP…PETP), 773–884 (SAPA…QPPG), 978–1074 (STVS…EGVV), and 1322–1507 (AAPP…NDHY). A compositionally biased stretch (pro residues) spans 12 to 22 (APPPTGGPGPD). The span at 213 to 222 (SSPKLPSWRP) shows a compositional bias: low complexity. A Phosphoserine modification is found at Ser232. The tract at residues 425–460 (IMESLTPKEPQSLPASASQGSQKVPRKGRKKKNKEQ) is necessary for interaction with CREB1 and NRF1 and for transcriptional coactivation. The span at 437–446 (LPASASQGSQ) shows a compositional bias: polar residues. Residues 448 to 457 (VPRKGRKKKN) show a composition bias toward basic residues. The segment covering 475–496 (SSRGQSTVSAEVNSQAGSSQKQ) has biased composition (polar residues). Positions 515-524 (RAWARAWAAA) are enriched in low complexity. Ser541 bears the Phosphoserine mark. Residues 556 to 572 (ETSQANPTLSLNDSAQA) are compositionally biased toward polar residues. The span at 691–702 (DHPKVVSPEGKD) shows a compositional bias: basic and acidic residues. Positions 811-821 (MVSTHSEQVSS) are enriched in polar residues. Pro residues-rich tracts occupy residues 828–864 (VRPPPPPLPSVSPAGPIPSTVPAPLPPFPPSVPPLLP) and 874–884 (RLPPPPLQPPG). Phosphoserine occurs at positions 1059, 1393, and 1395. The segment at 1361–1432 (EASPCRSEMN…SSSSSVSSSS (72 aa)) is necessary for interaction with CREB1 and NRF1. Low complexity-rich tracts occupy residues 1409–1433 (SRSVSSGSSRTSEASSSSSVSSSSR) and 1453–1489 (SSCSSSGRSRRCSSSSSSSSSSSSCSSRSRSPSVSPC). An RRM domain is found at 1523–1599 (RVVFIGKIPG…QPFDLCFGGR (77 aa)).

Interacts with CREB1 and NRF1. In terms of tissue distribution, expressed in liver, heart, skeletal muscle, kidney and white and brown adipose tissues.

It localises to the nucleus. In terms of biological role, acts as a coactivator during transcriptional activation of nuclear genes related to mitochondrial biogenesis and cell growth. Involved in the transcription coactivation of CREB and NRF1 target genes. This Mus musculus (Mouse) protein is Peroxisome proliferator-activated receptor gamma coactivator-related protein 1 (Pprc1).